A 521-amino-acid polypeptide reads, in one-letter code: Interleukin-9 receptor (521 aa).

The N-terminal stretch at 1–40 (MGLGRCIWEGWTLESEALRRDMGTWLLACICICTCVCLGV) is a signal peptide. Over 41 to 270 (SVTGEGQGPR…GPLIPPWGWP (230 aa)) the chain is Extracellular. N-linked (GlcNAc...) asparagine glycans are attached at residues Asn117 and Asn156. A Fibronectin type-III domain is found at 149-259 (PPSDLQSNIS…QPVCFQAPQR (111 aa)). The short motif at 245 to 249 (WSEWS) is the WSXWS motif element. The helical transmembrane segment at 271-291 (GNTLVAVSIFLLLTGPTYLLF) threads the bilayer. The Cytoplasmic segment spans residues 292 to 521 (KLSPRVKRIF…VLSKARSWTF (230 aa)). Residues 301–309 (FYQNVPSPA) carry the Box 1 motif motif. Residues 413-439 (WAPTSLTRPAPPDSEGSRSSSSSSSSN) are disordered. Over residues 429–439 (SRSSSSSSSSN) the composition is skewed to low complexity.

The protein belongs to the type I cytokine receptor family. Type 4 subfamily. In terms of assembly, interacts with IL9.

Its subcellular location is the cell membrane. The protein resides in the secreted. Plays an important role in the immune response against parasites by acting as a receptor of IL9. The protein is Interleukin-9 receptor (IL9R) of Homo sapiens (Human).